The chain runs to 303 residues: 2-dehydropantoate 2-reductase (303 aa).

NADP(+)-binding positions include 7–12, R35, N103, A129, and R131; that span reads GAGSLG. Substrate is bound at residue N103. K182 functions as the Proton donor in the catalytic mechanism. Substrate-binding residues include N186, N190, N200, and S250. E262 contacts NADP(+).

It belongs to the ketopantoate reductase family.

It is found in the cytoplasm. The enzyme catalyses (R)-pantoate + NADP(+) = 2-dehydropantoate + NADPH + H(+). It participates in cofactor biosynthesis; (R)-pantothenate biosynthesis; (R)-pantoate from 3-methyl-2-oxobutanoate: step 2/2. Catalyzes the NADPH-dependent reduction of ketopantoate into pantoic acid. This Pseudomonas aeruginosa (strain ATCC 15692 / DSM 22644 / CIP 104116 / JCM 14847 / LMG 12228 / 1C / PRS 101 / PAO1) protein is 2-dehydropantoate 2-reductase (panE).